The primary structure comprises 1154 residues: DNA-directed RNA polymerase, mitochondrial (1154 aa).

A mitochondrion-targeting transit peptide spans 1 to 30 (MLRRKIQTYLSRSHIRRGLCGLRFFQTQRL). Positions 221–243 (ESENGKDQNGDSSLKEKQPDVET) are disordered. The span at 223–240 (ENGKDQNGDSSLKEKQPD) shows a compositional bias: basic and acidic residues. Active-site residues include aspartate 821, lysine 890, and aspartate 1061.

This sequence belongs to the phage and mitochondrial RNA polymerase family.

It is found in the mitochondrion. It carries out the reaction RNA(n) + a ribonucleoside 5'-triphosphate = RNA(n+1) + diphosphate. Functionally, DNA-dependent RNA polymerase catalyzes the transcription of DNA into RNA using the four ribonucleoside triphosphates as substrates. Combines in the mitochondrion with mitochondrial transcription factor mtf1 as a holoenzyme to recognize and initiate transcription at the core mitochondrial promoters. This chain is DNA-directed RNA polymerase, mitochondrial (rpo41), found in Schizosaccharomyces pombe (strain 972 / ATCC 24843) (Fission yeast).